A 360-amino-acid polypeptide reads, in one-letter code: MKTSMQAKLDQLTTRLAELNDLLSREDITSNIDQYRKLTREHAELQPVVEQYGLWRQTMNDAATAQELLSDASMKDFAEEEIRASRERMETLESELQKMLLPKDPNDDRNIFLEIRAGTGGDESALFAGDLLRMYLRYAERNRWQVEMMSASESDLGGYKEVIVRIAGEAAYSKLKFESGGHRVQRVPATETQGRIHTSACTVAVMPEADEIGEVEINPADLRIDTFRASGAGGQHINKTDSAVRVTHLPTGIVVECQDDRSQHKNKDRALKVLAARIKDKQYHEQHAKEAATRKSLIGSGDRSERIRTYNFPQGRLTDHRINLTLYRLESIMEGDLDELIAALVSEHQAELLASLGDAD.

N5-methylglutamine is present on Q235.

Belongs to the prokaryotic/mitochondrial release factor family. Post-translationally, methylated by PrmC. Methylation increases the termination efficiency of RF1.

Its subcellular location is the cytoplasm. In terms of biological role, peptide chain release factor 1 directs the termination of translation in response to the peptide chain termination codons UAG and UAA. This chain is Peptide chain release factor 1, found in Paraburkholderia phymatum (strain DSM 17167 / CIP 108236 / LMG 21445 / STM815) (Burkholderia phymatum).